The following is a 549-amino-acid chain: S-methyl thiourocanate hydratase (549 aa).

Methionine 49, glycine 173, methionine 174, glycine 175, aspartate 193, serine 198, asparagine 239, alanine 240, glutamine 260, valine 270, and tyrosine 318 together coordinate NAD(+).

This sequence belongs to the urocanase family. S-methyl thiourocanate hydratase subfamily. The cofactor is NAD(+).

The catalysed reaction is S-methyl-(E)-thiourocanate + H2O = S-methyl-thiohydantoin-5-propanoate. In terms of biological role, hydratase involved in the catabolism of S-methyl ergothioneine. Catalyzes the 1,4-addition of H(2)O to S-methyl thiourocanate, leading to the formation of S-methyl-thiohydantoin-5-propanoate, the second step in S-methyl ergothioneine degradation. Cannot use urocanate or thiourocanate as substrate. This Variovorax sp. (strain JCM 16519 / RA8) protein is S-methyl thiourocanate hydratase.